We begin with the raw amino-acid sequence, 365 residues long: Histidinol-phosphate aminotransferase (365 aa).

Lys227 is subject to N6-(pyridoxal phosphate)lysine.

The protein belongs to the class-II pyridoxal-phosphate-dependent aminotransferase family. Histidinol-phosphate aminotransferase subfamily. Homodimer. Pyridoxal 5'-phosphate is required as a cofactor.

It catalyses the reaction L-histidinol phosphate + 2-oxoglutarate = 3-(imidazol-4-yl)-2-oxopropyl phosphate + L-glutamate. It functions in the pathway amino-acid biosynthesis; L-histidine biosynthesis; L-histidine from 5-phospho-alpha-D-ribose 1-diphosphate: step 7/9. The protein is Histidinol-phosphate aminotransferase of Polaromonas naphthalenivorans (strain CJ2).